Reading from the N-terminus, the 513-residue chain is CUGBP Elav-like family member 2 (513 aa).

RRM domains follow at residues 35 to 118 (IKMF…PADS), 127 to 207 (RKLF…FADT), and 428 to 506 (ANLF…LKRS).

The protein belongs to the CELF/BRUNOL family.

The protein resides in the nucleus. It is found in the cytoplasm. Functionally, RNA-binding protein implicated in the regulation of several post-transcriptional events. May be involved in pre-mRNA alternative splicing, mRNA translation repression and stability. This chain is CUGBP Elav-like family member 2 (celf2), found in Xenopus tropicalis (Western clawed frog).